Consider the following 216-residue polypeptide: Somatotropin (216 aa).

A signal peptide spans 1–25 (MAPGSWFSPLLIAVVTLGLPQEAAA). His-45 is a binding site for Zn(2+). Cys-78 and Cys-189 are joined by a disulfide. Residue Glu-198 coordinates Zn(2+). Cys-206 and Cys-214 are oxidised to a cystine.

Belongs to the somatotropin/prolactin family.

It is found in the secreted. Functionally, growth hormone plays an important role in growth control. This Gallus gallus (Chicken) protein is Somatotropin (GH).